We begin with the raw amino-acid sequence, 193 residues long: NADH-ubiquinone oxidoreductase chain 2 (193 aa).

A run of 5 helical transmembrane segments spans residues 18–38 (FYST…KLGA), 39–59 (IFFL…FFLF), 83–103 (FFVL…GFFL), 116–138 (NLAF…LSTV), and 161–181 (LSFL…FFFL).

It localises to the mitochondrion inner membrane. The catalysed reaction is a ubiquinone + NADH + 5 H(+)(in) = a ubiquinol + NAD(+) + 4 H(+)(out). Functionally, core subunit of the mitochondrial membrane respiratory chain NADH dehydrogenase (Complex I) that is believed to belong to the minimal assembly required for catalysis. Complex I functions in the transfer of electrons from NADH to the respiratory chain. The immediate electron acceptor for the enzyme is believed to be ubiquinone. The protein is NADH-ubiquinone oxidoreductase chain 2 (ND2) of Paramecium tetraurelia.